The sequence spans 1213 residues: SWI/SNF complex subunit SMARCC2 (1213 aa).

The tract at residues 1–274 (MAVRKKDGGP…PVSRRKKISA (274 aa)) is marR-like, BRCT and chromo domains module. The region spanning 10–136 (PNVKYYEAAD…IEKSLVQNNC (127 aa)) is the MarR-like domain. Positions 140 to 183 (PNIFLCPEIEPKLLGKLKDIVKRHQGTISEDKSNASHVVYPVPG) constitute a BRCT; N-terminus domain. Positions 189-217 (EWVRPVMKRDKQVLLHWGYYPDSYDTWIP) constitute a Chromo domain. The BRCT; C-terminus domain occupies 233–257 (KPRKVHAKWILDTDTFNEWMNEEDY). A disordered region spans residues 256 to 413 (DYEVSDDKSP…GEQTKNPDLH (158 aa)). The span at 275–284 (KTLTDEVNSP) shows a compositional bias: polar residues. Serine 283, serine 286, serine 302, serine 304, and serine 306 each carry phosphoserine. Lysine 312 is modified (N6-(ADP-ribosyl)lysine). An N6-acetyllysine modification is found at lysine 326. Residues 331 to 344 (HREEEQEDLTKDMD) are compositionally biased toward basic and acidic residues. Residues serine 347 and serine 387 each carry the phosphoserine modification. Positions 379-398 (DLDEQDDESMETTGKDEDEN) are enriched in acidic residues. In terms of domain architecture, SWIRM spans 424-521 (IIIPSYAAWF…YQVDAESRPT (98 aa)). Glycyl lysine isopeptide (Lys-Gly) (interchain with G-Cter in SUMO2) cross-links involve residues lysine 564, lysine 566, lysine 568, and lysine 592. The SANT domain maps to 596 to 647 (SATREWTEQETLLLLEALEMYKDDWNKVSEHVGSRTQDECILHFLRLPIEDP). Lysine 704 participates in a covalent cross-link: Glycyl lysine isopeptide (Lys-Gly) (interchain with G-Cter in SUMO2). The disordered stretch occupies residues 724 to 848 (KVTGKADPAF…AEPEGERKTK (125 aa)). Residues 747–777 (EPERIEESGTEEARPEGQAADEKKEPKEPRE) show a composition bias toward basic and acidic residues. A Glycyl lysine isopeptide (Lys-Gly) (interchain with G-Cter in SUMO2) cross-link involves residue lysine 787. Positions 788-848 (EEISEVPKKD…AEPEGERKTK (61 aa)) are enriched in basic and acidic residues. Phosphoserine is present on serine 813. Lysine 848 participates in a covalent cross-link: Glycyl lysine isopeptide (Lys-Gly) (interchain with G-Cter in SUMO2). The stretch at 907–934 (EELETIMDREREALEYQRQQLLADRQAF) forms a coiled coil. Disordered regions lie at residues 947–1073 (RQQH…HPGV) and 1181–1213 (LPSA…PPPQ). Low complexity predominate over residues 949–962 (QHFQQMHQQQQQQP). Residues 963 to 974 (PTLPPGSQPIPP) are compositionally biased toward pro residues. Residues 975–1033 (TGAAGPPTVHGLAVPPAAVASAPPGSGAPPGSLGPSEQIGQAGTTAGPQQPQQAGAPQP) are compositionally biased toward low complexity. Pro residues-rich tracts occupy residues 1034–1060 (GAVP…PPSM) and 1185–1201 (SPLP…PTAP).

The protein belongs to the SMARCC family. In terms of assembly, component of the multiprotein chromatin-remodeling complexes SWI/SNF: SWI/SNF-A (BAF), SWI/SNF-B (PBAF) and related complexes. The canonical complex contains a catalytic subunit (either SMARCA4/BRG1/BAF190A or SMARCA2/BRM/BAF190B) and at least SMARCE1, ACTL6A/BAF53, SMARCC1/BAF155, SMARCC2/BAF170, and SMARCB1/SNF5/BAF47. Other subunits specific to each of the complexes may also be present permitting several possible combinations developmentally and tissue specific. Component of the BAF complex, which includes at least actin (ACTB), ARID1A/BAF250A, ARID1B/BAF250B, SMARCA2/BRM, SMARCA4/BRG1, ACTL6A/BAF53, ACTL6B/BAF53B, SMARCE1/BAF57, SMARCC1/BAF155, SMARCC2/BAF170, SMARCB1/SNF5/INI1, and one or more SMARCD1/BAF60A, SMARCD2/BAF60B, or SMARCD3/BAF60C. In muscle cells, the BAF complex also contains DPF3. Component of neural progenitors-specific chromatin remodeling complex (npBAF complex) composed of at least, ARID1A/BAF250A or ARID1B/BAF250B, SMARCD1/BAF60A, SMARCD3/BAF60C, SMARCA2/BRM/BAF190B, SMARCA4/BRG1/BAF190A, SMARCB1/BAF47, SMARCC1/BAF155, SMARCE1/BAF57, SMARCC2/BAF170, PHF10/BAF45A, ACTL6A/BAF53A and actin. Component of neuron-specific chromatin remodeling complex (nBAF complex) composed of at least, ARID1A/BAF250A or ARID1B/BAF250B, SMARCD1/BAF60A, SMARCD3/BAF60C, SMARCA2/BRM/BAF190B, SMARCA4/BRG1/BAF190A, SMARCB1/BAF47, SMARCC1/BAF155, SMARCE1/BAF57, SMARCC2/BAF170, DPF1/BAF45B, DPF3/BAF45C, ACTL6B/BAF53B and actin. Component of the SWI/SNF-B (PBAF) chromatin remodeling complex, at least composed of SMARCA4/BRG1, SMARCB1/BAF47/SNF5, ACTL6A/BAF53A or ACTL6B/BAF53B, SMARCE1/BAF57, SMARCD1/BAF60A, SMARCD2/BAF60B, perhaps SMARCD3/BAF60C, SMARCC1/BAF155, SMARCC2/BAF170, PBRM1/BAF180, ARID2/BAF200 and actin. May also interact with the SIN3A histone deacetylase transcription repressor complex in conjunction with SMARCA2 and SMARCA4. Interacts with SMARD1. Interacts with KDM6B. Interaction with RCOR1. Interacts with DPF2. Interacts with ERCC6. Interacts with FOS. In terms of processing, mono-ADP-ribosylation at Lys-312 by SIRT6 promotes recruitment to the enhancer region of the Heme oxygenase-1 (HO-1) locus, leading to transcription activation of the locus.

Its subcellular location is the nucleus. In terms of biological role, involved in transcriptional activation and repression of select genes by chromatin remodeling (alteration of DNA-nucleosome topology). Component of SWI/SNF chromatin remodeling complexes that carry out key enzymatic activities, changing chromatin structure by altering DNA-histone contacts within a nucleosome in an ATP-dependent manner. Can stimulate the ATPase activity of the catalytic subunit of these complexes. May be required for CoREST dependent repression of neuronal specific gene promoters in non-neuronal cells. Belongs to the neural progenitors-specific chromatin remodeling complex (npBAF complex) and the neuron-specific chromatin remodeling complex (nBAF complex). During neural development a switch from a stem/progenitor to a postmitotic chromatin remodeling mechanism occurs as neurons exit the cell cycle and become committed to their adult state. The transition from proliferating neural stem/progenitor cells to postmitotic neurons requires a switch in subunit composition of the npBAF and nBAF complexes. As neural progenitors exit mitosis and differentiate into neurons, npBAF complexes which contain ACTL6A/BAF53A and PHF10/BAF45A, are exchanged for homologous alternative ACTL6B/BAF53B and DPF1/BAF45B or DPF3/BAF45C subunits in neuron-specific complexes (nBAF). The npBAF complex is essential for the self-renewal/proliferative capacity of the multipotent neural stem cells. The nBAF complex along with CREST plays a role regulating the activity of genes essential for dendrite growth. Critical regulator of myeloid differentiation, controlling granulocytopoiesis and the expression of genes involved in neutrophil granule formation. The chain is SWI/SNF complex subunit SMARCC2 (Smarcc2) from Mus musculus (Mouse).